The following is a 203-amino-acid chain: Phospho-2-dehydro-3-deoxyheptonate aldolase (203 aa).

Residues 1 to 10 (MIDRLVRDSR) are compositionally biased toward basic and acidic residues. Residues 1 to 28 (MIDRLVRDSRGPVTERNPPHMSLSAGPA) are disordered.

Belongs to the class-I DAHP synthase family.

The catalysed reaction is D-erythrose 4-phosphate + phosphoenolpyruvate + H2O = 7-phospho-2-dehydro-3-deoxy-D-arabino-heptonate + phosphate. It participates in metabolic intermediate biosynthesis; chorismate biosynthesis; chorismate from D-erythrose 4-phosphate and phosphoenolpyruvate: step 1/7. In terms of biological role, stereospecific condensation of phosphoenolpyruvate (PEP) and D-erythrose-4-phosphate (E4P) giving rise to 3-deoxy-D-arabino-heptulosonate-7-phosphate (DAHP). In Amycolatopsis methanolica, this protein is Phospho-2-dehydro-3-deoxyheptonate aldolase (aroA).